A 388-amino-acid polypeptide reads, in one-letter code: Pectin acetylesterase 1 (388 aa).

The first 24 residues, 1–24 (MKTLLYWGWSSLAGLILFSILAHG), serve as a signal peptide directing secretion. N-linked (GlcNAc...) asparagine glycosylation is found at asparagine 30 and asparagine 33. Residues serine 187 and aspartate 283 each act as charge relay system in the active site. The N-linked (GlcNAc...) asparagine glycan is linked to asparagine 304. The active-site Charge relay system is histidine 349.

Belongs to the pectinacetylesterase family.

It localises to the secreted. It is found in the cell wall. Functionally, hydrolyzes acetyl esters in homogalacturonan regions of pectin. In type I primary cell wall, galacturonic acid residues of pectin can be acetylated at the O-2 and O-3 positions. Decreasing the degree of acetylation of pectin gels in vitro alters their physical properties. The sequence is that of Pectin acetylesterase 1 from Arabidopsis thaliana (Mouse-ear cress).